The following is a 287-amino-acid chain: MPELPEVETVRQGLAQWVTDRRIAEVQVLHPRAVRRHAAGAAHFADVLRETTVRDVRRRGKYLWLPLDSGDAVVGHLGMSGQLLLQPAAAPDETHLRVRFRFADDGPELRFVDQRTFGGLSVSAGGAELPTEIAHIARDPLDPEFSDATFVAALRRRRTEIKRALLDQTLLSGVGNIYADEALWRARLHGTRPTDGLTGPAVLRLLGHVRDVLGEAVKEGGTSFDALYVNVNGESGYFDRALNVYGRADQPCRRCGEPVRREAFMNRSSFSCPRCQPRPRRAVPARG.

The active-site Schiff-base intermediate with DNA is P2. E3 serves as the catalytic Proton donor. K61 (proton donor; for beta-elimination activity) is an active-site residue. DNA is bound by residues H95, R115, and R157. The FPG-type zinc finger occupies 243–277 (NVYGRADQPCRRCGEPVRREAFMNRSSFSCPRCQP). The active-site Proton donor; for delta-elimination activity is the R267.

The protein belongs to the FPG family. Monomer. Requires Zn(2+) as cofactor.

The catalysed reaction is Hydrolysis of DNA containing ring-opened 7-methylguanine residues, releasing 2,6-diamino-4-hydroxy-5-(N-methyl)formamidopyrimidine.. It catalyses the reaction 2'-deoxyribonucleotide-(2'-deoxyribose 5'-phosphate)-2'-deoxyribonucleotide-DNA = a 3'-end 2'-deoxyribonucleotide-(2,3-dehydro-2,3-deoxyribose 5'-phosphate)-DNA + a 5'-end 5'-phospho-2'-deoxyribonucleoside-DNA + H(+). Involved in base excision repair of DNA damaged by oxidation or by mutagenic agents. Acts as a DNA glycosylase that recognizes and removes damaged bases. Has a preference for oxidized purines, such as 7,8-dihydro-8-oxoguanine (8-oxoG). Has AP (apurinic/apyrimidinic) lyase activity and introduces nicks in the DNA strand. Cleaves the DNA backbone by beta-delta elimination to generate a single-strand break at the site of the removed base with both 3'- and 5'-phosphates. This is Formamidopyrimidine-DNA glycosylase from Salinispora tropica (strain ATCC BAA-916 / DSM 44818 / JCM 13857 / NBRC 105044 / CNB-440).